A 112-amino-acid polypeptide reads, in one-letter code: Protein 4.2 (112 aa).

Positions 64–93 (KPDGLNHQVTQGKKSHTQSQQTGPTTLTSD) are disordered. The span at 70-92 (HQVTQGKKSHTQSQQTGPTTLTS) shows a compositional bias: polar residues.

This chain is Protein 4.2, found in Escherichia phage T7 (Bacteriophage T7).